The primary structure comprises 792 residues: Probable G-protein coupled receptor 156 (792 aa).

Topologically, residues 1–49 (MEPEINCSEFCDSFPGQELDRRPLHDLCKTTITDSQHGSADISPLSPAL) are extracellular. N-linked (GlcNAc...) asparagine glycosylation occurs at Asn-6. A helical membrane pass occupies residues 50–70 (LGVIWTFLSCGLLLVLFFLAF). At 71–86 (TIRCRKNRIVKMSSPN) the chain is on the cytoplasmic side. Residues 87 to 107 (LNIVTLLGSCLTYSSAYLFGI) traverse the membrane as a helical segment. Over 108-118 (QDALVGSSVEA) the chain is Extracellular. Residues 119-139 (LIQTRLSLLCIGTTLVFGPIL) form a helical membrane-spanning segment. Over 140-164 (GKSWRLYKVFTQRVPDKRVIIKDLQ) the chain is Cytoplasmic. Residues 165-185 (LLGLVAALVVADVILLVTWVL) form a helical membrane-spanning segment. The Extracellular segment spans residues 186-222 (TDPIQCLQILGVSMKVTGRDVSCSLTNTHFCASRYSD). Residues 223-243 (VWIALVLGCKGLLLLYGAYLA) form a helical membrane-spanning segment. Topologically, residues 244–257 (GLTNHVSSPPVNQS) are cytoplasmic. A helical membrane pass occupies residues 258–278 (LTIMVGVNLLLLTAGLLFVVT). At 279 to 287 (RYLHSWPNL) the chain is on the extracellular side. Residues 288 to 308 (VFGLTSGGIFVCTTTVNCCVF) form a helical membrane-spanning segment. The Cytoplasmic segment spans residues 309–792 (LPQLRQRKAF…FKDDLKPTLV (484 aa)). Residues 354–390 (EXSCMERLLTEKNAVIESLQEQVSNAKEKLVKLMSAE) are a coiled coil. 3 disordered regions span residues 407-457 (GGPA…KYDM), 469-516 (GCSQ…EVLP), and 538-704 (DLGT…QRQP). Residues 422-434 (AAAEDSLPASAAS) show a composition bias toward low complexity. Basic and acidic residues-rich tracts occupy residues 443 to 457 (SRRD…KYDM) and 474 to 486 (PKAE…ERGN). Positions 554 to 567 (PWKSNTSGSPQKLS) are enriched in polar residues. Over residues 578–589 (VRRRRAAQRARS) the composition is skewed to basic residues. Residues 602-619 (QANNTVSGSQNGLIVQNR) are compositionally biased toward polar residues. The span at 620-635 (DSPRLDHHNARSKEPR) shows a compositional bias: basic and acidic residues. A compositionally biased stretch (low complexity) spans 675 to 704 (PRQPSASAPAQSSTAPCLSSXPALPRQRQP).

Belongs to the G-protein coupled receptor 3 family. GABA-B receptor subfamily. Widely expressed throughout the brain and is particularly dense in the olfactory tubercles, islands of Calleja, nucleus accumbens, piriform cortex and all fields of the hippocampus.

It is found in the cell membrane. In terms of biological role, orphan G-protein coupled receptor involved in the regulation of hair cell orientation in mechanosensory organs of the inner ear. It is required to trigger a 180 degree reversal in hair cell orientation, creating a virtual line of polarity reversal (LPR) across which stereociliary bundles are arranged in opposite orientations. This chain is Probable G-protein coupled receptor 156 (Gpr156), found in Rattus norvegicus (Rat).